We begin with the raw amino-acid sequence, 76 residues long: Putative defensin-like protein 62 (76 aa).

The first 26 residues, 1–26 (MDVTKTYVTIFVVAILTISVLIQIQQ), serve as a signal peptide directing secretion. 4 cysteine pairs are disulfide-bonded: Cys-30–Cys-71, Cys-34–Cys-57, Cys-43–Cys-69, and Cys-47–Cys-70.

This sequence belongs to the DEFL family.

Its subcellular location is the secreted. This Arabidopsis thaliana (Mouse-ear cress) protein is Putative defensin-like protein 62.